Here is a 95-residue protein sequence, read N- to C-terminus: Large ribosomal subunit protein bL25 (95 aa).

The protein belongs to the bacterial ribosomal protein bL25 family. In terms of assembly, part of the 50S ribosomal subunit; part of the 5S rRNA/L5/L18/L25 subcomplex. Contacts the 5S rRNA. Binds to the 5S rRNA independently of L5 and L18.

Its function is as follows. This is one of the proteins that binds to the 5S RNA in the ribosome where it forms part of the central protuberance. The protein is Large ribosomal subunit protein bL25 of Glaesserella parasuis serovar 5 (strain SH0165) (Haemophilus parasuis).